A 545-amino-acid polypeptide reads, in one-letter code: Chaperonin GroEL (545 aa).

Residues 30–33 (TLGP), Lys51, 87–91 (DGTTT), Gly415, 479–481 (NAA), and Asp495 contribute to the ATP site.

The protein belongs to the chaperonin (HSP60) family. As to quaternary structure, forms a cylinder of 14 subunits composed of two heptameric rings stacked back-to-back. Interacts with the co-chaperonin GroES.

Its subcellular location is the cytoplasm. The catalysed reaction is ATP + H2O + a folded polypeptide = ADP + phosphate + an unfolded polypeptide.. Together with its co-chaperonin GroES, plays an essential role in assisting protein folding. The GroEL-GroES system forms a nano-cage that allows encapsulation of the non-native substrate proteins and provides a physical environment optimized to promote and accelerate protein folding. This Salmonella agona (strain SL483) protein is Chaperonin GroEL.